The chain runs to 374 residues: Conserved virulence factor C (374 aa).

Belongs to the CvfC family.

Functionally, required for hemolysin production. Contributes to virulence in both silkworm-infection model and mice. The polypeptide is Conserved virulence factor C (cvfC) (Staphylococcus aureus (strain NCTC 8325 / PS 47)).